Consider the following 201-residue polypeptide: Histidine biosynthesis bifunctional protein HisIE (201 aa).

A phosphoribosyl-AMP cyclohydrolase region spans residues 1–114; sequence MLTAQQIEKL…FAPAQTEWGF (114 aa). Residues 115–201 are phosphoribosyl-ATP pyrophosphohydrolase; it reads LYQLEKLLAS…SCVIRRLRER (87 aa).

This sequence in the N-terminal section; belongs to the PRA-CH family. It in the C-terminal section; belongs to the PRA-PH family.

Its subcellular location is the cytoplasm. It catalyses the reaction 1-(5-phospho-beta-D-ribosyl)-ATP + H2O = 1-(5-phospho-beta-D-ribosyl)-5'-AMP + diphosphate + H(+). The catalysed reaction is 1-(5-phospho-beta-D-ribosyl)-5'-AMP + H2O = 1-(5-phospho-beta-D-ribosyl)-5-[(5-phospho-beta-D-ribosylamino)methylideneamino]imidazole-4-carboxamide. It functions in the pathway amino-acid biosynthesis; L-histidine biosynthesis; L-histidine from 5-phospho-alpha-D-ribose 1-diphosphate: step 2/9. The protein operates within amino-acid biosynthesis; L-histidine biosynthesis; L-histidine from 5-phospho-alpha-D-ribose 1-diphosphate: step 3/9. The chain is Histidine biosynthesis bifunctional protein HisIE from Photorhabdus laumondii subsp. laumondii (strain DSM 15139 / CIP 105565 / TT01) (Photorhabdus luminescens subsp. laumondii).